We begin with the raw amino-acid sequence, 555 residues long: Meiotic mRNA stability protein kinase SSN3 (555 aa).

A Protein kinase domain is found at 75 to 463 (YEVIGYIAAG…AFNALEHKYF (389 aa)). 81–89 (IAAGTYGKV) lines the ATP pocket. Residues 100 to 138 (TNSANGSSLNGTNAKIPQFDSTQPKSSSSMDMQANTNAL) show a composition bias toward polar residues. The tract at residues 100–166 (TNSANGSSLN…REDVSPHYNS (67 aa)) is disordered. Lys183 lines the ATP pocket. The Proton acceptor role is filled by Asp286.

This sequence belongs to the protein kinase superfamily. CMGC Ser/Thr protein kinase family. CDC2/CDKX subfamily. Component of the SRB8-11 complex which consists of SRB8, SSN2/SRB9, SSN3/SRB10 and SSN8/SRB11. The SRB8-11 complex associates with the Mediator complex. The SSN3/SRB10 and SSN8/SRB11 kinase-cyclin pair also associate with the RNA polymerase II holoenzyme. Interacts with TUP1.

Its subcellular location is the nucleus. The enzyme catalyses L-seryl-[protein] + ATP = O-phospho-L-seryl-[protein] + ADP + H(+). It carries out the reaction L-threonyl-[protein] + ATP = O-phospho-L-threonyl-[protein] + ADP + H(+). The catalysed reaction is [DNA-directed RNA polymerase] + ATP = phospho-[DNA-directed RNA polymerase] + ADP + H(+). Functionally, component of the SRB8-11 complex. The SRB8-11 complex is a regulatory module of the Mediator complex which is itself involved in regulation of basal and activated RNA polymerase II-dependent transcription. The SRB8-11 complex may be involved in the transcriptional repression of a subset of genes regulated by Mediator. It may inhibit the association of the Mediator complex with RNA polymerase II to form the holoenzyme complex. The SRB8-11 complex phosphorylates the C-terminal domain (CTD) of the largest subunit of RNA polymerase II RPB1 at serines 2 and 5. The SSN3/SRB10 and SSN8/SRB11 kinase-cyclin pair may also positively and negatively regulate numerous transcriptional activators in response to changes in nutritional and physiological conditions. Phosphorylates GCN4, promoting its ubiquitin-mediated degradation, and MSN2, promoting its nuclear exclusion. Phosphorylates STE12, thereby promoting its degradation and inhibition of filamentous growth. Phosphorylates GAL4, and this phosphorylation is required for efficient galactose-inducible transcription. Also phosphorylates BDF1 and the TAF2 subunit of the TFIID complex. This is Meiotic mRNA stability protein kinase SSN3 (SSN3) from Saccharomyces cerevisiae (strain ATCC 204508 / S288c) (Baker's yeast).